The chain runs to 218 residues: Pyridoxine/pyridoxamine 5'-phosphate oxidase (218 aa).

Residues 14–17 (RREY) and Lys72 contribute to the substrate site. Residues 67–72 (RIVLLK), 82–83 (YT), Arg88, Lys89, and Gln111 contribute to the FMN site. The substrate site is built by Tyr129, Arg133, and Ser137. Residues 146–147 (QS) and Trp191 each bind FMN. 197-199 (RLH) provides a ligand contact to substrate. Residue Arg201 participates in FMN binding.

The protein belongs to the pyridoxamine 5'-phosphate oxidase family. In terms of assembly, homodimer. FMN serves as cofactor.

The enzyme catalyses pyridoxamine 5'-phosphate + O2 + H2O = pyridoxal 5'-phosphate + H2O2 + NH4(+). The catalysed reaction is pyridoxine 5'-phosphate + O2 = pyridoxal 5'-phosphate + H2O2. It participates in cofactor metabolism; pyridoxal 5'-phosphate salvage; pyridoxal 5'-phosphate from pyridoxamine 5'-phosphate: step 1/1. The protein operates within cofactor metabolism; pyridoxal 5'-phosphate salvage; pyridoxal 5'-phosphate from pyridoxine 5'-phosphate: step 1/1. Functionally, catalyzes the oxidation of either pyridoxine 5'-phosphate (PNP) or pyridoxamine 5'-phosphate (PMP) into pyridoxal 5'-phosphate (PLP). This Escherichia coli O127:H6 (strain E2348/69 / EPEC) protein is Pyridoxine/pyridoxamine 5'-phosphate oxidase.